We begin with the raw amino-acid sequence, 623 residues long: ATPase expression protein 3 (623 aa).

PPR repeat units lie at residues 217-251 (SVQCYNDILYFYSKKYDFATCRELFAQMKVEGCKP), 252-292 (NTTT…NGIF), 362-396 (NLKFVNLLISDLVLDHNVERAWSVLRYFELKQLKF), 405-439 (NSETMNTFLRYFAEQGRIDLCFLTYNYFVKDLVGP), and 445-479 (NVNTFDMLMKSLVKNGYTETLPTVFEVICALSERY).

It is found in the mitochondrion inner membrane. Required for respiration. The polypeptide is ATPase expression protein 3 (AEP3) (Candida glabrata (strain ATCC 2001 / BCRC 20586 / JCM 3761 / NBRC 0622 / NRRL Y-65 / CBS 138) (Yeast)).